A 356-amino-acid chain; its full sequence is UDP-N-acetylglucosamine--N-acetylmuramyl-(pentapeptide) pyrophosphoryl-undecaprenol N-acetylglucosamine transferase (356 aa).

UDP-N-acetyl-alpha-D-glucosamine is bound by residues 15–17 (TGG), asparagine 127, arginine 163, serine 191, isoleucine 244, 263–268 (ALTVSE), and glutamine 288.

This sequence belongs to the glycosyltransferase 28 family. MurG subfamily.

The protein resides in the cell inner membrane. It catalyses the reaction di-trans,octa-cis-undecaprenyl diphospho-N-acetyl-alpha-D-muramoyl-L-alanyl-D-glutamyl-meso-2,6-diaminopimeloyl-D-alanyl-D-alanine + UDP-N-acetyl-alpha-D-glucosamine = di-trans,octa-cis-undecaprenyl diphospho-[N-acetyl-alpha-D-glucosaminyl-(1-&gt;4)]-N-acetyl-alpha-D-muramoyl-L-alanyl-D-glutamyl-meso-2,6-diaminopimeloyl-D-alanyl-D-alanine + UDP + H(+). Its pathway is cell wall biogenesis; peptidoglycan biosynthesis. Its function is as follows. Cell wall formation. Catalyzes the transfer of a GlcNAc subunit on undecaprenyl-pyrophosphoryl-MurNAc-pentapeptide (lipid intermediate I) to form undecaprenyl-pyrophosphoryl-MurNAc-(pentapeptide)GlcNAc (lipid intermediate II). This Klebsiella pneumoniae subsp. pneumoniae (strain ATCC 700721 / MGH 78578) protein is UDP-N-acetylglucosamine--N-acetylmuramyl-(pentapeptide) pyrophosphoryl-undecaprenol N-acetylglucosamine transferase.